A 594-amino-acid chain; its full sequence is Aspartate--tRNA(Asp/Asn) ligase (594 aa).

Glu-173 is an L-aspartate binding site. Positions 197 to 200 (QLFK) are aspartate. Residue Arg-219 coordinates L-aspartate. ATP contacts are provided by residues 219–221 (RDE) and Gln-228. L-aspartate is bound at residue His-449. Residue Glu-482 coordinates ATP. Arg-489 contributes to the L-aspartate binding site. 534–537 (GLDR) lines the ATP pocket.

This sequence belongs to the class-II aminoacyl-tRNA synthetase family. Type 1 subfamily. As to quaternary structure, homodimer.

It is found in the cytoplasm. It carries out the reaction tRNA(Asx) + L-aspartate + ATP = L-aspartyl-tRNA(Asx) + AMP + diphosphate. In terms of biological role, aspartyl-tRNA synthetase with relaxed tRNA specificity since it is able to aspartylate not only its cognate tRNA(Asp) but also tRNA(Asn). Reaction proceeds in two steps: L-aspartate is first activated by ATP to form Asp-AMP and then transferred to the acceptor end of tRNA(Asp/Asn). This Saccharophagus degradans (strain 2-40 / ATCC 43961 / DSM 17024) protein is Aspartate--tRNA(Asp/Asn) ligase.